The chain runs to 102 residues: Large ribosomal subunit protein uL24 (102 aa).

This sequence belongs to the universal ribosomal protein uL24 family. In terms of assembly, part of the 50S ribosomal subunit.

Its function is as follows. One of two assembly initiator proteins, it binds directly to the 5'-end of the 23S rRNA, where it nucleates assembly of the 50S subunit. In terms of biological role, one of the proteins that surrounds the polypeptide exit tunnel on the outside of the subunit. The sequence is that of Large ribosomal subunit protein uL24 from Agrobacterium fabrum (strain C58 / ATCC 33970) (Agrobacterium tumefaciens (strain C58)).